The chain runs to 343 residues: MESKYKEILLLTGLDNITDEELDRFKFFLSDEFNIATGKLHTANRIQVATLMIQNAGAVSAVMKTIRIFQKLNYMLLAKRLQEEKEKVDKQYKSVTKPKPLSQAEMSPAASAAIRNDVAKQRAAPKVSPHVKPEQKQMVAQQESIREGFQKRCLPVMVLKAKKPFTFETQEGKQEMFHATVATEKEFFFVKVFNTLLKDKFIPKRIIIIARYYRHSGFLEVNSASRVLDAESDQKVNVPLNIIRKAGETPKINTLQTQPLGTIVNGLFVVQKVTEKKKNILFDLSDNTGKMEVLGVRNEDTMKCKEGDKVRLTFFTLSKNGEKLQLTSGVHSTIKVIKAKKKT.

Residues 1 to 87 (MESKYKEILL…AKRLQEEKEK (87 aa)) enclose the Pyrin domain. The 200-residue stretch at 138-337 (MVAQQESIRE…SGVHSTIKVI (200 aa)) folds into the HIN-200 domain.

The protein belongs to the HIN-200 family. As to quaternary structure, self-associates; forms homooligomers in response to cytosolic double-stranded DNA (dsDNA) and the dsDNA seems to serve as oligomerization platform. Component of AIM2 inflammasome, which consists of a signal sensor component (AIM2), an adapter (PYCARD/ASC), which recruits an effector pro-inflammatory caspase (CASP1). Interacts (via pyrin domain) with PYCARD/ASC (via pyrin domain); interaction is direct. Component of the AIM2 PANoptosome complex, a multiprotein complex that drives inflammatory cell death (PANoptosis). Interacts with PYDC5; disrupts assembly of the AIM2 inflammasome complex. Interacts with EIF2AK2/PKR. Interacts with MAPRE1. Interacts with IFI16. Interacts with isoform IFI16-beta of IFI16; preventing the interaction between AIM2 and PYCARD/ASC. Interacts with RACK1; promoting association with PP2A phosphatase and dephosphorylation of AKT1. Interacts with TRIM11; promoting AIM2 recruitment to autophagosomes and autophagy-dependent degradation. In terms of assembly, (Microbial infection) Interacts with human herpesvirus 8 protein SOX/ORF37; this interaction inhibits AIM2 polymerization and subsequent inflammasome activation. Post-translationally, degraded via selective autophagy following interaction with TRIM11. As to expression, expressed in spleen, small intestine, peripheral blood leukocytes, and testis.

The protein localises to the cytoplasm. The protein resides in the inflammasome. It localises to the nucleus. Its activity is regulated as follows. Inactive in absence of double-stranded DNA (dsDNA). Homooligomerizes upon binding to dsDNA, dsDNA serving as an oligomerization platform. AIM2 requires large dsDNA to generate a structural template that couples dsDNA ligand-binding and homooligomerization. Homooligomerization is followed by recruitment of PYCARD/ASC to initiate speck formation (nucleation). AIM2 and PYCARD/ASC homooligomer filaments assemble bidirectionally and the recognition between AIM2 and PYCARD/ASC oligomers occurs in a head-to-tail manner. Clustered PYCARD/ASC nucleates the formation of CASP1 filaments through the interaction of their respective CARD domains, acting as a platform for CASP1 polymerization and activation. Active CASP1 then specifically processes protein precursors, such as gasdermin-D (GSDMD), IL1B and IL18, leading to the release of mature cytokines in the extracellular milieu or pyroptosis, depending on cell type. AIM2 can be activated in response to events that cause genomic DNA (HIV protease inhibitor nelfinavir) or mitochondrial DNA release in the cytoplasm (such as Perfluoroalkyl substance pollutants or cholesterol overload). Activation of the AIM2 inflammasome is inhibited by isoform IFI16-beta of IFI16, which prevents the interaction between AIM2 and PYCARD/ASC. Activation of the AIM2 inflammasome is inhibited by TRIM11, which promotes autophagy-dependent degradation of AIM2. Its function is as follows. Sensor component of the AIM2 inflammasome, which mediates inflammasome activation in response to the presence of double-stranded DNA (dsDNA) in the cytosol, leading to subsequent pyroptosis. Inflammasomes are supramolecular complexes that assemble in the cytosol in response to pathogens and other damage-associated signals and play critical roles in innate immunity and inflammation. Acts as a recognition receptor (PRR): specifically recognizes and binds dsDNA in the cytosol, and mediates the formation of the inflammasome polymeric complex composed of AIM2, CASP1 and PYCARD/ASC. Recruitment of pro-caspase-1 (proCASP1) to the AIM2 inflammasome promotes caspase-1 (CASP1) activation, which subsequently cleaves and activates inflammatory cytokines IL1B and IL18 and gasdermin-D (GSDMD), promoting cytokine secretion. In some cells, CASP1 activation mediates cleavage and activation of GSDMD, triggering pyroptosis without promoting cytokine secretion. Detects cytosolic dsDNA of viral and bacterial origin in a non-sequence-specific manner. Involved in the DNA damage response caused by acute ionizing radiation by mediating pyroptosis of intestinal epithelial cells and bone marrow cells in response to double-strand DNA breaks. Mechanistically, AIM2 senses DNA damage in the nucleus to mediate inflammasome assembly and inflammatory cell death. Also acts as a regulator of neurodevelopment via its role in the DNA damage response: acts by promoting neural cell death in response to DNA damage in the developing brain, thereby purging genetically compromised cells of the central nervous system. Pyroptosis mediated by the AIM2 inflammasome in response to DNA damage is dependent on GSDMD without involving IL1B and IL18 cytokine secretion. Also acts as a mediator of pyroptosis, necroptosis and apoptosis (PANoptosis), an integral part of host defense against pathogens, in response to bacterial infection. Can also trigger PYCARD/ASC-dependent, caspase-1-independent cell death that involves caspase-8 (CASP8). In terms of biological role, also acts as a tumor suppressor independently of its role in inflammatory response. Able to suppress overt cell proliferation in enterocytes: restricts stem cell proliferation in the intestinal mucosa in an inflammasome-independent manner, contributing to a decrease in the likelihood of colorectal cancer development. AIM2 suppresses cell proliferation by inhibiting phosphorylation of AKT1 at 'Ser-473', preventing AKT1 activation and AKT-mTOR signaling pathway. Inhibits AKT1 phosphorylation both by inhibiting the activity of PRKDC/DNA-PK kinase and promoting dephosphorylation by PP2A phosphatase. Also acts as a key regulator of regulatory T-cells (Treg) homeostasis by promoting their stability: acts by preventing AKT1 activation. Its role in Treg homeostasis is important to restain autoimmune diseases. The protein is Interferon-inducible protein AIM2 of Homo sapiens (Human).